Consider the following 598-residue polypeptide: Transcription factor dpl-1 (598 aa).

Disordered regions lie at residues 1 to 73, 435 to 457, and 573 to 598; these read MNPT…PTGL, NRPY…VNSG, and TEQP…DYFQ. The segment covering 13–22 has biased composition (polar residues); it reads PAQSRPQVSL. Residues 55-64 are compositionally biased toward gly residues; that stretch reads GVGGSSGAGG.

This sequence belongs to the E2F/DP family. Component of the DRM complex, at least composed of lin-9, lin-35, lin-37, lin-52, lin-53, lin-54- dpl-1 and efl-1. Interacts (via N-terminus) with efl-1. Interacts (via C-terminus) with lin-35 (via C-terminus).

The protein resides in the nucleus. Its function is as follows. Synthetic multivulva class B (synMuvB) protein. SynMuvB proteins are required to repress the induction of vulval development by Ras signaling and probably act by forming the multiprotein DRM complex that represses transcription. May also negatively regulate vulval development in association with other SynMuv class B proteins such as lin-15A. Can stimulate E2F-dependent transcription. Plays a role in negatively regulating the progression through the G1 phase of the cell cycle during postembryonic development, most likely by acting as a transcriptional repressor in association with the cell cycle regulatory factor efl-1 and the transcriptional repressor lin-35, but may also act as a positive regulator of cell cycle entry. Involved in the regulation of intestinal cell division during postembryonic development, most likely in complex with efl-1 and lin-35. Promotes germ cell programmed cell death, probably together with efl-1, by positively regulating the expression of the apoptosis proteins ced-3 and ced-4. In particular, positively regulates the expression of ced-4 in response to starvation. Its role in programmed cell death may be in conjunction with cell cycle regulatory factor efl-1 and the synthetic multivulva class B proteins lin-35, lin-37 and lin-52, and is independent of the ced-1, ced-8 and ced-9 pathways. The protein is Transcription factor dpl-1 of Caenorhabditis elegans.